We begin with the raw amino-acid sequence, 423 residues long: Histidine--tRNA ligase (423 aa).

This sequence belongs to the class-II aminoacyl-tRNA synthetase family. Homodimer.

Its subcellular location is the cytoplasm. The enzyme catalyses tRNA(His) + L-histidine + ATP = L-histidyl-tRNA(His) + AMP + diphosphate + H(+). The chain is Histidine--tRNA ligase from Haemophilus ducreyi (strain 35000HP / ATCC 700724).